Reading from the N-terminus, the 245-residue chain is MSLQWTTVATFLYAEVFAVLLLCIPFISPKRWQKVFKSRLVELVVTYGNTFFVVLIVILVLLVIDAVREILKYDDVTEKVNLQNNPGAMEHFHMKLFRAQRNLYIAGFSLLLSFLLRRLVTLISQQATLLASNEAFKKQAESASEAAKKYMEENDQLKKGAAEDGDKLDIGNTEMKLEENKSLKNDLRKLKDELASTKKKLEKAENEALAMQKQSEGLTKEYDRLLEEHAKLQASVRGPSVKKEE.

Residues 2 to 6 (SLQWT) lie on the Lumenal side of the membrane. Residues 7-27 (TVATFLYAEVFAVLLLCIPFI) form a helical membrane-spanning segment. At 28–43 (SPKRWQKVFKSRLVEL) the chain is on the cytoplasmic side. The helical transmembrane segment at 44-64 (VVTYGNTFFVVLIVILVLLVI) threads the bilayer. Residues 65-102 (DAVREILKYDDVTEKVNLQNNPGAMEHFHMKLFRAQRN) are Lumenal-facing. Residues 103 to 123 (LYIAGFSLLLSFLLRRLVTLI) traverse the membrane as a helical segment. Residues 124–245 (SQQATLLASN…VRGPSVKKEE (122 aa)) lie on the Cytoplasmic side of the membrane. Positions 165-236 (GDKLDIGNTE…EEHAKLQASV (72 aa)) form a coiled coil. Residues 242–245 (KKEE) carry the Di-lysine motif motif.

This sequence belongs to the BCAP29/BCAP31 family. In terms of assembly, homodimer and heterodimer with BCAP29. Binds CASP8 (isoform 9) as a complex containing BCAP31, BCAP29, BCL2 and/or BCL2L1. Forms a complex (via C-terminus) with TOMM40 which mediates the translocation of components of the mitochondrial membrane respiratory chain NADH dehydrogenase (Complex I) from the cytosol to the mitochondria; within the complex BCAP31 interacts directly with unprocessed and processed NDUFS4 and NDUFB11. Interacts with VDAC1. Interacts with VAMP3, VAMP1 and membrane IgD immunoglobulins. Interacts with HACD2. Interacts with DNM1L; may form part of a larger protein complex at the endoplasmic reticulum-mitochondrial interface during mitochondrial fission. In terms of processing, cleaved by CASP8 and other caspases. Ubiquitous.

The protein resides in the endoplasmic reticulum membrane. It localises to the endoplasmic reticulum-Golgi intermediate compartment membrane. Its function is as follows. Functions as a chaperone protein. Is one of the most abundant endoplasmic reticulum (ER) proteins. Plays a role in the export of secreted proteins in the ER, the recognition of abnormally folded protein and their targeting to the ER associated-degradation (ERAD). Also serves as a cargo receptor for the export of transmembrane proteins. Plays a role in the assembly of the mitochondrial membrane respiratory chain NADH dehydrogenase (Complex I) by stimulating the translocation of NDUFS4 and NDUFB11 from the cytosol to the mitochondria via interaction with TOMM40. In response to ER stress, delocalizes from the ER-mitochondria contact sites and binds BCL2. May be involved in CASP8-mediated apoptosis. The protein is B-cell receptor-associated protein 31 (Bcap31) of Mus musculus (Mouse).